Reading from the N-terminus, the 453-residue chain is Chromosomal replication initiator protein DnaA (453 aa).

Residues 1–74 (MKEKQFWNRI…GFEIYDAEIT (74 aa)) are domain I, interacts with DnaA modulators. Residues 74 to 113 (TPHYIFTKPQDTTSSQVEEATNLTLYDYSPKLVSIPYSDT) are domain II. The domain III, AAA+ region stretch occupies residues 114-331 (GLKEKYTFDN…GAINDITLIA (218 aa)). The ATP site is built by Gly-158, Gly-160, Lys-161, and Thr-162. The domain IV, binds dsDNA stretch occupies residues 332–453 (RVKKIKDITI…EIESIKKKIK (122 aa)).

Belongs to the DnaA family. As to quaternary structure, oligomerizes as a right-handed, spiral filament on DNA at oriC.

It localises to the cytoplasm. Plays an essential role in the initiation and regulation of chromosomal replication. ATP-DnaA binds to the origin of replication (oriC) to initiate formation of the DNA replication initiation complex once per cell cycle. Binds the DnaA box (a 9 base pair repeat at the origin) and separates the double-stranded (ds)DNA. Forms a right-handed helical filament on oriC DNA; dsDNA binds to the exterior of the filament while single-stranded (ss)DNA is stabiized in the filament's interior. The ATP-DnaA-oriC complex binds and stabilizes one strand of the AT-rich DNA unwinding element (DUE), permitting loading of DNA polymerase. After initiation quickly degrades to an ADP-DnaA complex that is not apt for DNA replication. Binds acidic phospholipids. The sequence is that of Chromosomal replication initiator protein DnaA from Streptococcus pneumoniae (strain P1031).